The chain runs to 537 residues: Eukaryotic translation initiation factor 3 subunit L (537 aa).

The region spanning 300–512 (TFSSILLYIQ…IHIADTKVSH (213 aa)) is the PCI domain.

This sequence belongs to the eIF-3 subunit L family. Component of the eukaryotic translation initiation factor 3 (eIF-3) complex.

Its subcellular location is the cytoplasm. Its function is as follows. Component of the eukaryotic translation initiation factor 3 (eIF-3) complex, which is involved in protein synthesis of a specialized repertoire of mRNAs and, together with other initiation factors, stimulates binding of mRNA and methionyl-tRNAi to the 40S ribosome. The eIF-3 complex specifically targets and initiates translation of a subset of mRNAs involved in cell proliferation. The chain is Eukaryotic translation initiation factor 3 subunit L from Culex quinquefasciatus (Southern house mosquito).